Here is a 100-residue protein sequence, read N- to C-terminus: Integration host factor subunit alpha (100 aa).

The protein belongs to the bacterial histone-like protein family. In terms of assembly, heterodimer of an alpha and a beta chain.

Its function is as follows. This protein is one of the two subunits of integration host factor, a specific DNA-binding protein that functions in genetic recombination as well as in transcriptional and translational control. This chain is Integration host factor subunit alpha, found in Caulobacter vibrioides (strain ATCC 19089 / CIP 103742 / CB 15) (Caulobacter crescentus).